The primary structure comprises 247 residues: tRNA (guanine-N(1)-)-methyltransferase (247 aa).

Residues glycine 115 and 135-140 each bind S-adenosyl-L-methionine; that span reads IGDYVL.

Belongs to the RNA methyltransferase TrmD family. As to quaternary structure, homodimer.

Its subcellular location is the cytoplasm. The enzyme catalyses guanosine(37) in tRNA + S-adenosyl-L-methionine = N(1)-methylguanosine(37) in tRNA + S-adenosyl-L-homocysteine + H(+). Specifically methylates guanosine-37 in various tRNAs. The sequence is that of tRNA (guanine-N(1)-)-methyltransferase from Alkaliphilus metalliredigens (strain QYMF).